Reading from the N-terminus, the 389-residue chain is Choline/ethanolaminephosphotransferase 2 (389 aa).

8 helical membrane passes run 49–69 (MITL…YIYS), 141–161 (TFWF…EHYF), 176–196 (GLAL…EWWA), 220–240 (IILF…NTSN), 252–272 (MLLA…VLIW), 286–306 (HLVV…MILA), 321–338 (MSLL…TARL), and 350–370 (VLLG…TSVI).

This sequence belongs to the CDP-alcohol phosphatidyltransferase class-I family. The cofactor is Mg(2+). Mn(2+) serves as cofactor.

The protein localises to the membrane. The enzyme catalyses CDP-ethanolamine + a 1,2-diacyl-sn-glycerol = a 1,2-diacyl-sn-glycero-3-phosphoethanolamine + CMP + H(+). It catalyses the reaction CDP-choline + a 1,2-diacyl-sn-glycerol = a 1,2-diacyl-sn-glycero-3-phosphocholine + CMP + H(+). It functions in the pathway phospholipid metabolism; phosphatidylethanolamine biosynthesis; phosphatidylethanolamine from ethanolamine: step 3/3. It participates in phospholipid metabolism; phosphatidylcholine biosynthesis; phosphatidylcholine from phosphocholine: step 2/2. Functionally, catalyzes both phosphatidylcholine and phosphatidylethanolamine biosynthesis from CDP-choline and CDP-ethanolamine, respectively. Has a higher cholinephosphotransferase activity than ethanolaminephosphotransferase activity. The chain is Choline/ethanolaminephosphotransferase 2 (AAPT2) from Arabidopsis thaliana (Mouse-ear cress).